Here is a 1568-residue protein sequence, read N- to C-terminus: Pentafunctional AROM polypeptide (1568 aa).

Residues 1–380 form a 3-dehydroquinate synthase region; that stretch reads MSQVEKVSIL…YQLKAHEVSK (380 aa). NAD(+) is bound by residues 43 to 45, 81 to 84, 112 to 114, and aspartate 117; these read DSN, ENNK, and GGV. Arginine 128 provides a ligand contact to 7-phospho-2-dehydro-3-deoxy-D-arabino-heptonate. 137–138 lines the NAD(+) pocket; the sequence is TT. Residues aspartate 144 and lysine 150 each contribute to the 7-phospho-2-dehydro-3-deoxy-D-arabino-heptonate site. Lysine 159 contributes to the NAD(+) binding site. A 7-phospho-2-dehydro-3-deoxy-D-arabino-heptonate-binding site is contributed by asparagine 160. Residues 177 to 180 and asparagine 188 contribute to the NAD(+) site; that span reads FLTT. Glutamate 192 lines the Zn(2+) pocket. 7-phospho-2-dehydro-3-deoxy-D-arabino-heptonate is bound by residues 192 to 195 and lysine 244; that span reads EVVK. Glutamate 254 (proton acceptor; for 3-dehydroquinate synthase activity) is an active-site residue. Residues 258-262 and histidine 265 contribute to the 7-phospho-2-dehydro-3-deoxy-D-arabino-heptonate site; that span reads RNLLN. Residue histidine 265 coordinates Zn(2+). The active-site Proton acceptor; for 3-dehydroquinate synthase activity is the histidine 269. 7-phospho-2-dehydro-3-deoxy-D-arabino-heptonate-binding residues include histidine 281 and lysine 352. Histidine 281 provides a ligand contact to Zn(2+). The tract at residues 393–842 is EPSP synthase; the sequence is VHPFQEETTP…WDVLHTKFGV (450 aa). Catalysis depends on cysteine 824, which acts as the For EPSP synthase activity. The segment at 867-1056 is shikimate kinase; sequence DKSIVVIGMR…VPKGRSFVLS (190 aa). An ATP-binding site is contributed by 874-881; it reads GMRAAGKS. A 3-dehydroquinase region spans residues 1057-1267; it reads LACSDLNDIA…SGNGQLTVGE (211 aa). Positions 1280 to 1568 are shikimate dehydrogenase; that stretch reads RRNFYIVGNP…VYEAVVDDNV (289 aa).

The protein in the N-terminal section; belongs to the sugar phosphate cyclases superfamily. Dehydroquinate synthase family. In the 2nd section; belongs to the EPSP synthase family. This sequence in the 3rd section; belongs to the shikimate kinase family. It in the 4th section; belongs to the type-I 3-dehydroquinase family. The protein in the C-terminal section; belongs to the shikimate dehydrogenase family. As to quaternary structure, homodimer. Zn(2+) serves as cofactor.

Its subcellular location is the cytoplasm. The catalysed reaction is 7-phospho-2-dehydro-3-deoxy-D-arabino-heptonate = 3-dehydroquinate + phosphate. It carries out the reaction 3-dehydroquinate = 3-dehydroshikimate + H2O. The enzyme catalyses shikimate + NADP(+) = 3-dehydroshikimate + NADPH + H(+). It catalyses the reaction shikimate + ATP = 3-phosphoshikimate + ADP + H(+). The catalysed reaction is 3-phosphoshikimate + phosphoenolpyruvate = 5-O-(1-carboxyvinyl)-3-phosphoshikimate + phosphate. It participates in metabolic intermediate biosynthesis; chorismate biosynthesis; chorismate from D-erythrose 4-phosphate and phosphoenolpyruvate: step 2/7. It functions in the pathway metabolic intermediate biosynthesis; chorismate biosynthesis; chorismate from D-erythrose 4-phosphate and phosphoenolpyruvate: step 3/7. Its pathway is metabolic intermediate biosynthesis; chorismate biosynthesis; chorismate from D-erythrose 4-phosphate and phosphoenolpyruvate: step 4/7. The protein operates within metabolic intermediate biosynthesis; chorismate biosynthesis; chorismate from D-erythrose 4-phosphate and phosphoenolpyruvate: step 5/7. It participates in metabolic intermediate biosynthesis; chorismate biosynthesis; chorismate from D-erythrose 4-phosphate and phosphoenolpyruvate: step 6/7. The AROM polypeptide catalyzes 5 consecutive enzymatic reactions in prechorismate polyaromatic amino acid biosynthesis. The protein is Pentafunctional AROM polypeptide of Clavispora lusitaniae (strain ATCC 42720) (Yeast).